The primary structure comprises 249 residues: Aquaporin SIP2-1 (249 aa).

2 helical membrane passes run 12-32 (PWLV…GALV) and 53-73 (VSLS…SGGA). The NPA 1 motif lies at 76–78 (NPL). 4 consecutive transmembrane segments (helical) span residues 104 to 124 (AQVI…PNVG), 133 to 155 (AHHG…VTLK), 176 to 196 (IHLL…AFAW), and 210 to 230 (LVYW…VTFF). An NPA 2 motif is present at residues 189-191 (NPA).

The protein belongs to the MIP/aquaporin (TC 1.A.8) family. SIP (TC 1.A.8.10) subfamily.

Its subcellular location is the membrane. Functionally, aquaporins facilitate the transport of water and small neutral solutes across cell membranes. This chain is Aquaporin SIP2-1 (SIP2-1), found in Zea mays (Maize).